We begin with the raw amino-acid sequence, 432 residues long: Trigger factor (432 aa).

A PPIase FKBP-type domain is found at Glu-161–Pro-246.

Belongs to the FKBP-type PPIase family. Tig subfamily. Homodimer and monomer. In vivo most of the ribosomes are in complex with monomeric TF. Uncomplexed TF, however, is in a monomer-dimer equilibrium with approximately two thirds of TF existing in a dimeric state.

It is found in the cytoplasm. The enzyme catalyses [protein]-peptidylproline (omega=180) = [protein]-peptidylproline (omega=0). Its function is as follows. Involved in protein export. Acts as a chaperone by maintaining the newly synthesized protein in an open conformation. Functions as a peptidyl-prolyl cis-trans isomerase. This chain is Trigger factor, found in Shigella dysenteriae serotype 1 (strain Sd197).